An 81-amino-acid chain; its full sequence is Small ribosomal subunit protein bS18 (81 aa).

This sequence belongs to the bacterial ribosomal protein bS18 family. As to quaternary structure, part of the 30S ribosomal subunit. Forms a tight heterodimer with protein bS6.

Functionally, binds as a heterodimer with protein bS6 to the central domain of the 16S rRNA, where it helps stabilize the platform of the 30S subunit. The protein is Small ribosomal subunit protein bS18 of Leptospira borgpetersenii serovar Hardjo-bovis (strain JB197).